We begin with the raw amino-acid sequence, 363 residues long: MEFEHRPVLLAPTVDALLLADFAGKGAARSGRQDGAQADARAQRGVFVDGTFGRGGHSRELLRRLGPEARLVVFDKDPQAIAVANELAAGDARVTVVHGGFAAMREELAARGIESIDGVMLDLGVSSPQLDDAGRGFSFMREGPLDMRMDTTRGPTVADWLAQASVDEMREVIADYGEERFAFQVAKAIAARRATRPLRTTLELAECVASAVRTREKGQHPATRTFQALRIYINRELEELSRALASALELLAPGGRLAVISFHSLEDRMVKQCIAAAARPAVAHARLPLRESELPQPLYRSLGRVQADDEEIAGNARARSAVLRVAERTTEPLGADGAAAFVPAMRVPGEAAPARRGARRRPH.

S-adenosyl-L-methionine-binding positions include glycine 55 to histidine 57, aspartate 75, aspartate 122, and glutamine 129.

The protein belongs to the methyltransferase superfamily. RsmH family.

The protein resides in the cytoplasm. The catalysed reaction is cytidine(1402) in 16S rRNA + S-adenosyl-L-methionine = N(4)-methylcytidine(1402) in 16S rRNA + S-adenosyl-L-homocysteine + H(+). Its function is as follows. Specifically methylates the N4 position of cytidine in position 1402 (C1402) of 16S rRNA. This Bordetella petrii (strain ATCC BAA-461 / DSM 12804 / CCUG 43448) protein is Ribosomal RNA small subunit methyltransferase H.